Consider the following 440-residue polypeptide: Thymidine phosphorylase (440 aa).

This sequence belongs to the thymidine/pyrimidine-nucleoside phosphorylase family. As to quaternary structure, homodimer.

The enzyme catalyses thymidine + phosphate = 2-deoxy-alpha-D-ribose 1-phosphate + thymine. The protein operates within pyrimidine metabolism; dTMP biosynthesis via salvage pathway; dTMP from thymine: step 1/2. Functionally, the enzymes which catalyze the reversible phosphorolysis of pyrimidine nucleosides are involved in the degradation of these compounds and in their utilization as carbon and energy sources, or in the rescue of pyrimidine bases for nucleotide synthesis. This is Thymidine phosphorylase from Salmonella arizonae (strain ATCC BAA-731 / CDC346-86 / RSK2980).